The following is a 358-amino-acid chain: Protein RecA (358 aa).

67-74 (GPESSGKT) serves as a coordination point for ATP.

Belongs to the RecA family.

It localises to the cytoplasm. Functionally, can catalyze the hydrolysis of ATP in the presence of single-stranded DNA, the ATP-dependent uptake of single-stranded DNA by duplex DNA, and the ATP-dependent hybridization of homologous single-stranded DNAs. It interacts with LexA causing its activation and leading to its autocatalytic cleavage. This Xenorhabdus nematophila (strain ATCC 19061 / DSM 3370 / CCUG 14189 / LMG 1036 / NCIMB 9965 / AN6) protein is Protein RecA.